The chain runs to 931 residues: Beta-mannosidase A (931 aa).

The first 21 residues, 1–21 (MRHSIGLAAALLAPTLPVALG), serve as a signal peptide directing secretion. N-linked (GlcNAc...) asparagine glycans are attached at residues N40, N79, N247, N282, and N347. E479 serves as the catalytic Proton donor. N-linked (GlcNAc...) asparagine glycans are attached at residues N550, N608, N658, N738, N790, N798, N830, and N918.

It belongs to the glycosyl hydrolase 2 family. Beta-mannosidase A subfamily. In terms of assembly, homodimer. In terms of processing, N-glycosylated.

The protein localises to the secreted. It catalyses the reaction Hydrolysis of terminal, non-reducing beta-D-mannose residues in beta-D-mannosides.. It functions in the pathway glycan metabolism; N-glycan degradation. Its function is as follows. Exoglycosidase that cleaves the single beta-linked mannose residue from the non-reducing end of beta-mannosidic oligosaccharides of various complexity and length. Involved in the degradation of polymeric mannan and galactomannan. Releases the terminal mannose residue from mannobiose and mannotriose, as well as from galactosyl-mannobiose (GM2), galactosyl-mannotriose (GM3) and di-galactosyl-mannopentaose (G2M5). This is Beta-mannosidase A (mndA) from Aspergillus niger.